The following is a 363-amino-acid chain: Sorting nexin-21 (363 aa).

Residues 1–11 are compositionally biased toward basic residues; sequence MASRLLHRLRH. The segment at 1–99 is disordered; the sequence is MASRLLHRLR…PPPDGQRSSQ (99 aa). Residues 12-28 are compositionally biased toward low complexity; that stretch reads ALASDGPGEAAAGPEAE. Polar residues predominate over residues 46 to 56; sequence SRLSGTLSFTS. Over residues 57-71 the composition is skewed to acidic residues; it reads AEDDPDDEDEDDEAG. The PX domain occupies 119 to 236; that stretch reads QRLLFEVTSA…DFFVLPELRR (118 aa). Residues Arg-161, Ser-163, Lys-188, and Arg-202 each contribute to the a 1,2-diacyl-sn-glycero-3-phospho-(1D-myo-inositol-3-phosphate) site.

It belongs to the sorting nexin family. In terms of assembly, monomer.

The protein resides in the cytoplasmic vesicle membrane. It localises to the early endosome membrane. Its function is as follows. Binds to membranes enriched in phosphatidylinositol 3-phosphate (PtdIns(P3)) and phosphatidylinositol 4,5-bisphosphate. May be involved in several stages of intracellular trafficking. In Mus musculus (Mouse), this protein is Sorting nexin-21.